Here is a 462-residue protein sequence, read N- to C-terminus: Succinate semialdehyde dehydrogenase [NAD(P)+] Sad (462 aa).

NADP(+)-binding positions include 136–137, 160–163, and 212–213; these read WN, KHAP, and GS. Glu-234 (proton acceptor) is an active-site residue. Leu-235 is a binding site for NADP(+). Catalysis depends on Cys-268, which acts as the Nucleophile. Glu-365 provides a ligand contact to NADP(+).

This sequence belongs to the aldehyde dehydrogenase family. In terms of assembly, homodimer.

It carries out the reaction succinate semialdehyde + NAD(+) + H2O = succinate + NADH + 2 H(+). It catalyses the reaction succinate semialdehyde + NADP(+) + H2O = succinate + NADPH + 2 H(+). It participates in amino-acid degradation; 4-aminobutanoate degradation. Catalyzes the NAD(+)-dependent oxidation of succinate semialdehyde to succinate. It acts preferentially with NAD as cosubstrate but can also use NADP. Prevents the toxic accumulation of succinate semialdehyde (SSA) and plays an important role when arginine and putrescine are used as the sole nitrogen or carbon sources. This is Succinate semialdehyde dehydrogenase [NAD(P)+] Sad (sad) from Escherichia coli (strain K12).